Consider the following 439-residue polypeptide: Transmembrane protease serine 11F (439 aa).

The Cytoplasmic portion of the chain corresponds to 1–33; the sequence is MMYAPVEFSQTAYPRIEYQRRQQQFWDPIRLAL. Residues 34–54 form a helical; Signal-anchor for type II membrane protein membrane-spanning segment; that stretch reads FTLAIVAIVGITIGIVTHFVV. Residues 55–439 lie on the Extracellular side of the membrane; sequence EDDKSFYYLA…RDWIASKTGL (385 aa). Residues 58–176 form the SEA domain; the sequence is KSFYYLASFQ…PSFSLTPIDS (119 aa). The Peptidase S1 domain maps to 207-438; that stretch reads IVQGRETAME…YRDWIASKTG (232 aa). Residues Cys-234 and Cys-250 are joined by a disulfide bond. Active-site charge relay system residues include His-249 and Asp-294. Cystine bridges form between Cys-359-Cys-375 and Cys-386-Cys-414. Ser-390 functions as the Charge relay system in the catalytic mechanism.

It belongs to the peptidase S1 family.

It localises to the membrane. Functionally, probable serine protease. This chain is Transmembrane protease serine 11F (Tmprss11f), found in Mus musculus (Mouse).